The chain runs to 228 residues: MRKKRVITCVMAASLTLGSLLPAGYASAKEDSKTTPSYEELALHYKMKSEKISSNGKLVEIEYVSGNETHKVQMNGNNHTVKVDGIEQKGLNFEYDENVAKRTNYENNNLKSNEFTTQAAKPKKGYHYVGTLSGHTKAAKNALSVTMSLVGIVPGLGWGSKAATILFSYWAKEQIPDAYYKYDLYEKGAMTDSWYQYATVQFFEDKAHKKKMGKPWTSTPAKVDLPNS.

The first 28 residues, 1 to 28 (MRKKRVITCVMAASLTLGSLLPAGYASA), serve as a signal peptide directing secretion.

This is an uncharacterized protein from Bacillus subtilis (strain 168).